A 291-amino-acid chain; its full sequence is Probable aquaporin PIP2-4 (291 aa).

At Met-1 the chain carries N-acetylmethionine. Residues 1-22 are disordered; sequence MAKDLDVNESGPPAARDYKDPP. The residue at position 2 (Ala-2) is an N-acetylalanine; in Probable aquaporin PIP2-4, N-terminally processed. Over 2–39 the chain is Cytoplasmic; that stretch reads AKDLDVNESGPPAARDYKDPPPAPFFDMEELRKWPLYR. Lys-3 is modified (N6,N6-dimethyllysine). A helical membrane pass occupies residues 40–60; the sequence is AVIAEFVATLLFLYVSILTVI. At 61-74 the chain is on the extracellular side; sequence GYKAQTDATAGGVD. A helical transmembrane segment spans residues 75 to 95; it reads CGGVGILGIAWAFGGMIFVLV. Residues 96–125 are Cytoplasmic-facing; that stretch reads YCTAGISGGHINPAVTVGLFLARKVSLVRT. The short motif at 107–109 is the NPA 1 element; sequence NPA. The helical transmembrane segment at 126 to 146 threads the bilayer; sequence VLYIVAQCLGAICGCGFVKAF. At 147-167 the chain is on the extracellular side; that stretch reads QSSYYTRYGGGANELADGYNK. The helical transmembrane segment at 168–188 threads the bilayer; that stretch reads GTGLGAEIIGTFVLVYTVFSA. The Cytoplasmic segment spans residues 189–201; the sequence is TDPKRNARDSHVP. The helical transmembrane segment at 202 to 222 threads the bilayer; the sequence is VLAPLPIGFAVFMVHLATIPI. The Extracellular segment spans residues 223–249; the sequence is TGTGINPARSFGAAVIYNNEKAWDDQW. Positions 228–230 match the NPA 2 motif; sequence NPA. The chain crosses the membrane as a helical span at residues 250–270; sequence IFWVGPMIGAAAAAFYHQFIL. Over 271 to 291 the chain is Cytoplasmic; sequence RAAAIKALGSFGSFGSFRSFA. Phosphoserine is present on residues Ser-283, Ser-286, and Ser-289.

The protein belongs to the MIP/aquaporin (TC 1.A.8) family. PIP (TC 1.A.8.11) subfamily. As to expression, expressed in roots.

The protein localises to the cell membrane. Aquaporins facilitate the transport of water and small neutral solutes across cell membranes. The protein is Probable aquaporin PIP2-4 (PIP2-4) of Arabidopsis thaliana (Mouse-ear cress).